The chain runs to 792 residues: Terminal nucleotidyltransferase 4A (792 aa).

The interval 55–191 (GAAGRGSGGL…QFHPGRRKRE (137 aa)) is disordered. 2 stretches are compositionally biased toward low complexity: residues 80 to 97 (APAA…PAAE) and 105 to 139 (SPSL…ASLG). 2 residues coordinate Mg(2+): Asp297 and Asp299. Gly360, Lys385, Ser403, and Tyr404 together coordinate ATP. Residues 428–486 (NLGMLLVEFFELYGRNFNYLKTGIRIKEGGAYIAKEEIMKAMTSGYRPSMLCIEDPLLP) form the PAP-associated domain. Asn488 and Arg492 together coordinate ATP. The span at 601-619 (QLLSSGSSASSVSSLSGSD) shows a compositional bias: low complexity. Disordered regions lie at residues 601–632 (QLLS…TPSV) and 737–792 (MKGS…SLSR). Residues 744–756 (TQGGGYSSVGSGG) are compositionally biased toward gly residues. Residues 764–781 (RGHHQYNRTGWRRKKHTH) are compositionally biased toward basic residues.

The protein belongs to the DNA polymerase type-B-like family. Component of a nuclear TRAMP-like complex, an ATP-dependent exosome regulatory complex consisting of a helicase (MTREX), an oligadenylate polymerase (TENT4B or TENT4A), and a substrate specific RNA-binding factor (ZCCHC7 or ZCCHC8). Several TRAMP-like complexes exist with specific compositions and are associated with nuclear, or nucleolar RNA exosomes. It depends on Mg(2+) as a cofactor. Requires Mn(2+) as cofactor.

It localises to the cytoplasm. The protein localises to the nucleus. It is found in the nucleoplasm. It catalyses the reaction RNA(n) + ATP = RNA(n)-3'-adenine ribonucleotide + diphosphate. In terms of biological role, terminal nucleotidyltransferase that catalyzes preferentially the transfer of ATP and GTP on RNA 3' poly(A) tail creating a heterogeneous 3' poly(A) tail leading to mRNAs stabilization by protecting mRNAs from active deadenylation. Also functions as a catalytic subunit of a TRAMP-like complex which has a poly(A) RNA polymerase activity and is involved in a post-transcriptional quality control mechanism. Polyadenylation with short oligo(A) tails is required for the degradative activity of the exosome on several of its nuclear RNA substrates. Has no terminal uridylyltransferase activity, and does not play a role in replication-dependent histone mRNA degradation via uridylation. This Homo sapiens (Human) protein is Terminal nucleotidyltransferase 4A.